A 522-amino-acid polypeptide reads, in one-letter code: Sensory neuron membrane protein 1 (522 aa).

The Cytoplasmic segment spans residues 1 to 11 (MQLAKPLKYAA). Residues 12–32 (ISGIVAFVGLMFGWVIFPAIL) traverse the membrane as a helical segment. The Extracellular segment spans residues 33-458 (KSQLKKEMAL…SQLFIPKRVV (426 aa)). Asparagine 67, asparagine 105, and asparagine 229 each carry an N-linked (GlcNAc...) asparagine glycan. Intrachain disulfides connect cysteine 268–cysteine 333, cysteine 297–cysteine 352, and cysteine 335–cysteine 341. The N-linked (GlcNAc...) asparagine glycan is linked to asparagine 440. A helical membrane pass occupies residues 459 to 479 (SVVCWCMISFGSLGVIAAVIF). The Cytoplasmic portion of the chain corresponds to 480–522 (HFKGDIMHLAVAGDNSVSKIKPENDENKEVGVMGQNQEPAKVM). Positions 500–522 (KPENDENKEVGVMGQNQEPAKVM) are disordered. A compositionally biased stretch (polar residues) spans 513–522 (GQNQEPAKVM).

Belongs to the CD36 family. Principal component of the olfactory cilia membrane. Detected in both male and female antennae but not present in leg, abdomen, thorax or head.

Its subcellular location is the cell membrane. Functionally, plays an olfactory role that is not restricted to pheromone sensitivity. The protein is Sensory neuron membrane protein 1 of Bombyx mori (Silk moth).